The sequence spans 197 residues: Holliday junction branch migration complex subunit RuvA (197 aa).

The domain I stretch occupies residues 1 to 63; it reads MIALLNGQLI…EDALLLFGFL (63 aa). The interval 64–142 is domain II; the sequence is TETEKDLFGL…PVQAVPGNAP (79 aa). The segment at 142-146 is flexible linker; sequence PLPAE. Residues 147–197 form a domain III region; that stretch reads TAGDLREDALSALVNLGYKENLSRKALDGIDTAPDAPLEDILKQALKLLMR.

It belongs to the RuvA family. As to quaternary structure, homotetramer. Forms an RuvA(8)-RuvB(12)-Holliday junction (HJ) complex. HJ DNA is sandwiched between 2 RuvA tetramers; dsDNA enters through RuvA and exits via RuvB. An RuvB hexamer assembles on each DNA strand where it exits the tetramer. Each RuvB hexamer is contacted by two RuvA subunits (via domain III) on 2 adjacent RuvB subunits; this complex drives branch migration. In the full resolvosome a probable DNA-RuvA(4)-RuvB(12)-RuvC(2) complex forms which resolves the HJ.

The protein localises to the cytoplasm. Its function is as follows. The RuvA-RuvB-RuvC complex processes Holliday junction (HJ) DNA during genetic recombination and DNA repair, while the RuvA-RuvB complex plays an important role in the rescue of blocked DNA replication forks via replication fork reversal (RFR). RuvA specifically binds to HJ cruciform DNA, conferring on it an open structure. The RuvB hexamer acts as an ATP-dependent pump, pulling dsDNA into and through the RuvAB complex. HJ branch migration allows RuvC to scan DNA until it finds its consensus sequence, where it cleaves and resolves the cruciform DNA. This Syntrophotalea carbinolica (strain DSM 2380 / NBRC 103641 / GraBd1) (Pelobacter carbinolicus) protein is Holliday junction branch migration complex subunit RuvA.